Consider the following 295-residue polypeptide: Small ribosomal subunit protein uS3 (295 aa).

In terms of domain architecture, KH type-2 spans 39–107 (VREYLKKKLK…PVAVNIEEVR (69 aa)). The disordered stretch occupies residues 213-295 (GTGAKMIEVA…AAAADGAKTE (83 aa)). Basic and acidic residues predominate over residues 224–245 (EERKPRGPRRDARPGDRPDRGA). Low complexity-rich tracts occupy residues 246-255 (PRGAPRAPRG) and 283-295 (AAPA…AKTE).

The protein belongs to the universal ribosomal protein uS3 family. In terms of assembly, part of the 30S ribosomal subunit. Forms a tight complex with proteins S10 and S14.

Binds the lower part of the 30S subunit head. Binds mRNA in the 70S ribosome, positioning it for translation. This is Small ribosomal subunit protein uS3 from Polaromonas naphthalenivorans (strain CJ2).